A 1138-amino-acid chain; its full sequence is Tyrosine-protein kinase receptor Tie-1 (1138 aa).

The signal sequence occupies residues 1–21 (MVWRVPPFLLPILFLASHVGA). At 22–759 (AVDLTLLANL…SRAAEEGLDQ (738 aa)) the chain is on the extracellular side. The region spanning 43–105 (CVSGEAGAGR…PSDLVGVFSC (63 aa)) is the Ig-like C2-type 1 domain. N-linked (GlcNAc...) asparagine glycosylation is found at N83 and N161. EGF-like domains follow at residues 214 to 256 (GCGA…TRCE), 258 to 303 (ACRE…SQCQ), and 305 to 345 (ACAP…VHCE). Cystine bridges form between C228/C237, C231/C244, and C246/C255. Disulfide bonds link C315–C327, C321–C333, and C335–C344. Positions 372–426 (CAAAGNPFPVRGSIELRKPDGTVLLSTKAIVEPEKTTAEFEVPRLVLADSGFWEC) constitute an Ig-like C2-type 2 domain. Fibronectin type-III domains follow at residues 446–545 (PPVP…CPEP), 548–642 (QPWL…LPPS), and 646–739 (APRH…TLGN). N-linked (GlcNAc...) asparagine glycosylation is found at N503, N596, and N709. The helical transmembrane segment at 760–784 (QLILAVVGSVSATCLTILAALLTLV) threads the bilayer. The Cytoplasmic portion of the chain corresponds to 785–1138 (CIRRSCLHRR…AGIDATAEEA (354 aa)). Residues 839 to 1118 (ITFEDLIGEG…RMLEARKAYV (280 aa)) enclose the Protein kinase domain. ATP-binding positions include 845–853 (IGEGNFGQV) and K870. The active-site Proton acceptor is the D979. Y1007 is modified (phosphotyrosine; by autocatalysis).

Belongs to the protein kinase superfamily. Tyr protein kinase family. Tie subfamily. Heterodimer with TEK/TIE2. Interacts with SVEP1 (via C-terminus). In terms of processing, phosphorylated on tyrosine residues in response to ANGPT1, most likely by TEK/TIE2. Specifically expressed in developing vascular endothelial cells.

It is found in the cell membrane. It carries out the reaction L-tyrosyl-[protein] + ATP = O-phospho-L-tyrosyl-[protein] + ADP + H(+). In terms of biological role, transmembrane tyrosine-protein kinase that may modulate TEK/TIE2 activity and contribute to the regulation of angiogenesis. This chain is Tyrosine-protein kinase receptor Tie-1 (TIE1), found in Homo sapiens (Human).